The chain runs to 376 residues: Arf-GAP with dual PH domain-containing protein 2 (376 aa).

Residues 9–130 (KRLLELLQAA…EFMAEKAVSP (122 aa)) form the Arf-GAP domain. The C4-type zinc finger occupies 25-48 (CADCGAADPDWASYKLGVFICLHC). PH domains are found at residues 131-232 (PGDR…AARL) and 254-360 (NYLK…GVLS).

Expressed in many tissues, with highest levels in fat, heart and skeletal muscle. Also detected in kidney, liver and lung.

Its subcellular location is the cytoplasm. It is found in the cell membrane. In terms of biological role, GTPase-activating protein for the ADP ribosylation factor family (Potential). Binds phosphatidylinositol 4,5-bisphosphate, phosphatidylinositol 3,4,5-trisphosphate (PtdInsP3) and inositol 1,3,4,5-tetrakisphosphate (InsP4). Binding of phosphatidylinositol 3,5-bisphosphate and phosphatidylinositol 3,4-bisphosphate occurs at a much lower affinity. Possesses a stoichiometry of two binding sites for InsP4 with identical affinity. This chain is Arf-GAP with dual PH domain-containing protein 2 (Adap2), found in Rattus norvegicus (Rat).